The following is a 324-amino-acid chain: Adenine deaminase (324 aa).

3 residues coordinate Zn(2+): His-11, His-13, and His-189. Glu-192 (proton donor) is an active-site residue. A Zn(2+)-binding site is contributed by Asp-270. Substrate is bound at residue Asp-271.

It belongs to the metallo-dependent hydrolases superfamily. Adenosine and AMP deaminases family. Adenine deaminase type 2 subfamily. The cofactor is Zn(2+).

The catalysed reaction is adenine + H2O + H(+) = hypoxanthine + NH4(+). Functionally, catalyzes the hydrolytic deamination of adenine to hypoxanthine. Plays an important role in the purine salvage pathway and in nitrogen catabolism. The protein is Adenine deaminase of Rhizobium meliloti (strain 1021) (Ensifer meliloti).